Consider the following 82-residue polypeptide: Cytochrome b559 subunit alpha (82 aa).

The chain crosses the membrane as a helical span at residues 22–36 (IIHAVALPAIFVAGF). Histidine 24 contributes to the heme binding site.

This sequence belongs to the PsbE/PsbF family. As to quaternary structure, heterodimer of an alpha subunit and a beta subunit. PSII is composed of 1 copy each of membrane proteins PsbA, PsbB, PsbC, PsbD, PsbE, PsbF, PsbH, PsbI, PsbJ, PsbK, PsbL, PsbM, PsbT, PsbX, PsbY, Psb30/Ycf12, peripheral proteins PsbO, CyanoQ (PsbQ), PsbU, PsbV and a large number of cofactors. It forms dimeric complexes. Heme b is required as a cofactor.

Its subcellular location is the cellular thylakoid membrane. This b-type cytochrome is tightly associated with the reaction center of photosystem II (PSII). PSII is a light-driven water:plastoquinone oxidoreductase that uses light energy to abstract electrons from H(2)O, generating O(2) and a proton gradient subsequently used for ATP formation. It consists of a core antenna complex that captures photons, and an electron transfer chain that converts photonic excitation into a charge separation. This chain is Cytochrome b559 subunit alpha, found in Prochlorococcus marinus (strain NATL1A).